The chain runs to 245 residues: Leucyl/phenylalanyl-tRNA--protein transferase (245 aa).

The protein belongs to the L/F-transferase family.

It is found in the cytoplasm. The catalysed reaction is N-terminal L-lysyl-[protein] + L-leucyl-tRNA(Leu) = N-terminal L-leucyl-L-lysyl-[protein] + tRNA(Leu) + H(+). It carries out the reaction N-terminal L-arginyl-[protein] + L-leucyl-tRNA(Leu) = N-terminal L-leucyl-L-arginyl-[protein] + tRNA(Leu) + H(+). The enzyme catalyses L-phenylalanyl-tRNA(Phe) + an N-terminal L-alpha-aminoacyl-[protein] = an N-terminal L-phenylalanyl-L-alpha-aminoacyl-[protein] + tRNA(Phe). Its function is as follows. Functions in the N-end rule pathway of protein degradation where it conjugates Leu, Phe and, less efficiently, Met from aminoacyl-tRNAs to the N-termini of proteins containing an N-terminal arginine or lysine. This Paraburkholderia xenovorans (strain LB400) protein is Leucyl/phenylalanyl-tRNA--protein transferase.